A 141-amino-acid chain; its full sequence is Hemoglobin subunit alpha (141 aa).

Residues 1–141 (VLSPADKANI…VSTVLTSKYR (141 aa)) form the Globin domain. Ser3 carries the post-translational modification Phosphoserine. N6-succinyllysine occurs at positions 7 and 11. Lys16 carries the N6-acetyllysine; alternate modification. Lys16 bears the N6-succinyllysine; alternate mark. A Phosphotyrosine modification is found at Tyr24. Ser35 is modified (phosphoserine). N6-succinyllysine is present on Lys40. Phosphoserine is present on Ser49. His58 is an O2 binding site. Position 87 (His87) interacts with heme b. Residue Ser102 is modified to Phosphoserine. Thr108 is modified (phosphothreonine). Residues Ser124 and Ser131 each carry the phosphoserine modification. Phosphothreonine is present on residues Thr134 and Thr137. Phosphoserine is present on Ser138.

The protein belongs to the globin family. As to quaternary structure, heterotetramer of two alpha chains and two beta chains. In terms of tissue distribution, red blood cells.

Functionally, involved in oxygen transport from the lung to the various peripheral tissues. Hemopressin acts as an antagonist peptide of the cannabinoid receptor CNR1. Hemopressin-binding efficiently blocks cannabinoid receptor CNR1 and subsequent signaling. The chain is Hemoglobin subunit alpha (HBA) from Meles meles (Eurasian badger).